The sequence spans 299 residues: UDP-N-acetylenolpyruvoylglucosamine reductase (299 aa).

The region spanning 28-193 (KVGGPADILA…LSAKFELQAG (166 aa)) is the FAD-binding PCMH-type domain. Arg-172 is a catalytic residue. Ser-222 functions as the Proton donor in the catalytic mechanism. Glu-292 is a catalytic residue.

FAD is required as a cofactor.

Its subcellular location is the cytoplasm. It carries out the reaction UDP-N-acetyl-alpha-D-muramate + NADP(+) = UDP-N-acetyl-3-O-(1-carboxyvinyl)-alpha-D-glucosamine + NADPH + H(+). Its pathway is cell wall biogenesis; peptidoglycan biosynthesis. Functionally, cell wall formation. The polypeptide is UDP-N-acetylenolpyruvoylglucosamine reductase (Lactococcus lactis subsp. cremoris (strain MG1363)).